Here is a 201-residue protein sequence, read N- to C-terminus: Ras-related protein Rab-1B (201 aa).

Methionine 1 is modified (N-acetylmethionine). Serine 17, glycine 18, valine 19, glycine 20, lysine 21, serine 22, cysteine 23, tyrosine 33, threonine 34, glutamate 35, serine 36, serine 39, and threonine 40 together coordinate GTP. A Mg(2+)-binding site is contributed by serine 22. Residues 30 to 45 (DDTYTESYISTIGVDF) carry the Switch 1 motif. 2 residues coordinate Mg(2+): threonine 40 and aspartate 63. Positions 64 to 83 (TAGQERFRTITSSYYRGAHG) are switch 2 region; required for interaction with REP1/CHM. A Switch 2 motif is present at residues 65–80 (AGQERFRTITSSYYRG). Residues glycine 66, asparagine 121, lysine 122, aspartate 124, serine 151, alanine 152, and lysine 153 each coordinate GTP. Positions 174 to 201 (GPGAASGGERPNLKIDSTPVKPASGGCC) are disordered. 2 S-geranylgeranyl cysteine lipidation sites follow: cysteine 200 and cysteine 201. At cysteine 201 the chain carries Cysteine methyl ester.

The protein belongs to the small GTPase superfamily. Rab family. In terms of assembly, interacts with MICAL1 and MICAL2. Interacts (GTP-bound form) with MICALCL, MICAL1 and MILCAL3. Interacts with GDI1; the interaction requires the GDP-bound state. Interacts with CHM/REP1; the interaction requires the GDP-bound form and is necessary for prenylation by GGTase II. Interacts with RabGAP TBC1D20. Interacts (in GDP-bound form) with lipid phosphatase MTMR6 (via GRAM domain); the interaction regulates MTMR6 recruitment to the endoplasmic reticulum-Golgi intermediate compartment. Interacts (in GDP-bound form) with lipid phosphatase MTMR7. Mg(2+) serves as cofactor. Post-translationally, prenylated; by GGTase II, only after interaction of the substrate with Rab escort protein 1 (REP1).

It is found in the cytoplasm. It localises to the membrane. The protein resides in the preautophagosomal structure membrane. Its subcellular location is the perinuclear region. The catalysed reaction is GTP + H2O = GDP + phosphate + H(+). Its activity is regulated as follows. Regulated by guanine nucleotide exchange factors (GEFs) which promote the exchange of bound GDP for free GTP. Regulated by GTPase activating proteins (GAPs) including TBC1D20 which increases the GTP hydrolysis activity. Inhibited by GDP dissociation inhibitors (GDIs). The small GTPases Rab are key regulators of intracellular membrane trafficking, from the formation of transport vesicles to their fusion with membranes. Rabs cycle between an inactive GDP-bound form and an active GTP-bound form that is able to recruit to membranes different set of downstream effectors directly responsible for vesicle formation, movement, tethering and fusion. Plays a role in the initial events of the autophagic vacuole development which take place at specialized regions of the endoplasmic reticulum. Regulates vesicular transport between the endoplasmic reticulum and successive Golgi compartments. Required to modulate the compacted morphology of the Golgi. Promotes the recruitment of lipid phosphatase MTMR6 to the endoplasmic reticulum-Golgi intermediate compartment. The chain is Ras-related protein Rab-1B (Rab1b) from Mus musculus (Mouse).